Here is a 424-residue protein sequence, read N- to C-terminus: UPF0597 protein Shew185_3080 (424 aa).

Belongs to the UPF0597 family.

This Shewanella baltica (strain OS185) protein is UPF0597 protein Shew185_3080.